We begin with the raw amino-acid sequence, 199 residues long: Holliday junction branch migration complex subunit RuvA (199 aa).

Residues 1 to 65 (MIASLRGKLL…DRGQRLFGFG (65 aa)) are domain I. Residues 66-144 (SKKDRESFEL…KFEMFLNEGT (79 aa)) form a domain II region. The tract at residues 145-155 (TESSFVDRETD) is flexible linker. The tract at residues 155-199 (DLATLALIQLGFDEKSATKQVADAKKLNPGLSASDIVKQVITGTR) is domain III.

The protein belongs to the RuvA family. As to quaternary structure, homotetramer. Forms an RuvA(8)-RuvB(12)-Holliday junction (HJ) complex. HJ DNA is sandwiched between 2 RuvA tetramers; dsDNA enters through RuvA and exits via RuvB. An RuvB hexamer assembles on each DNA strand where it exits the tetramer. Each RuvB hexamer is contacted by two RuvA subunits (via domain III) on 2 adjacent RuvB subunits; this complex drives branch migration. In the full resolvosome a probable DNA-RuvA(4)-RuvB(12)-RuvC(2) complex forms which resolves the HJ.

Its subcellular location is the cytoplasm. The RuvA-RuvB-RuvC complex processes Holliday junction (HJ) DNA during genetic recombination and DNA repair, while the RuvA-RuvB complex plays an important role in the rescue of blocked DNA replication forks via replication fork reversal (RFR). RuvA specifically binds to HJ cruciform DNA, conferring on it an open structure. The RuvB hexamer acts as an ATP-dependent pump, pulling dsDNA into and through the RuvAB complex. HJ branch migration allows RuvC to scan DNA until it finds its consensus sequence, where it cleaves and resolves the cruciform DNA. The protein is Holliday junction branch migration complex subunit RuvA of Leptospira biflexa serovar Patoc (strain Patoc 1 / Ames).